Reading from the N-terminus, the 211-residue chain is Ras-related protein RABB1b (211 aa).

13-20 (GDTGVGKS) is a GTP binding site. The Effector region signature appears at 35–43 (HDLTIGVEF). GTP contacts are provided by residues 61–65 (DTAGQ), 119–122 (NKCD), and 149–150 (SA). Residues Cys-209 and Cys-210 are each lipidated (S-geranylgeranyl cysteine).

It belongs to the small GTPase superfamily. Rab family.

Its subcellular location is the cell membrane. Its function is as follows. Intracellular vesicle trafficking and protein transport. The protein is Ras-related protein RABB1b (RABB1B) of Arabidopsis thaliana (Mouse-ear cress).